The following is a 305-amino-acid chain: Nuclear egress protein 1 (305 aa).

Over residues 1 to 11 (MDRERPRKTRE) the composition is skewed to basic and acidic residues. Positions 1 to 24 (MDRERPRKTREPASPGSVLSKRSK) are disordered. The CCCH-type zinc-finger motif lies at 104–230 (CLVLSPLGHA…FALFKTDDLH (127 aa)).

Belongs to the herpesviridae NEC1 protein family. In terms of assembly, forms a heterohexameric complex with NEC2. Interacts with capsid vertex specific component 2/CVC2; this interaction directs the capsid to the host inner nuclear membrane to initiate budding. Phosphorylated at serine residues in the N-terminus. This phosphorylation regulates the localization within the inner nuclear membrane.

It is found in the host nucleus inner membrane. Plays an essential role in virion nuclear egress, the first step of virion release from infected cell. Within the host nucleus, NEC1 interacts with the newly formed capsid through the vertexes and directs it to the inner nuclear membrane by associating with NEC2. Induces the budding of the capsid at the inner nuclear membrane as well as its envelopment into the perinuclear space. There, the NEC1/NEC2 complex promotes the fusion of the enveloped capsid with the outer nuclear membrane and the subsequent release of the viral capsid into the cytoplasm where it will reach the secondary budding sites in the host Golgi or trans-Golgi network. This Equus caballus (Horse) protein is Nuclear egress protein 1.